Consider the following 229-residue polypeptide: MQRLAKIISNAGICSRRDAEKLILEGQVKVDGITILSPATNVDISNQIEVSGILINQSQKPRLWIYYKPVGLITTHKDPLSRKTVFEQLTGLPRVISIGRLDLNSEGLLLLTNSGDLARQFELPSNRLKRVYHVRAYGKSDILLKSDYKNLEIDGIFYNPHSIKLFKQNKSNSWFEVVLFEGKNREIRRIFEYFGLKVNKLIRIQYGSFTIDNLKPGAYKEINNKILEK.

The 68-residue stretch at 2–69 folds into the S4 RNA-binding domain; sequence QRLAKIISNA…KPRLWIYYKP (68 aa). Catalysis depends on Asp102, which acts as the Nucleophile.

This sequence belongs to the pseudouridine synthase RsuA family.

It catalyses the reaction a uridine in RNA = a pseudouridine in RNA. This is an uncharacterized protein from Rickettsia felis (strain ATCC VR-1525 / URRWXCal2) (Rickettsia azadi).